Here is a 388-residue protein sequence, read N- to C-terminus: Trans-enoyl reductase tenC (388 aa).

An NADP(+)-binding site is contributed by 51–54; that stretch reads VDGK. Residue 142-149 participates in substrate binding; it reads VGIASVGM. NADP(+) contacts are provided by residues 219–222, Y237, and 284–285; these read SSES and LD. Residue 304-308 coordinates substrate; that stretch reads SFTQF. 373-374 is an NADP(+) binding site; that stretch reads IK.

It belongs to the zinc-containing alcohol dehydrogenase family. Monomer.

Its pathway is secondary metabolite biosynthesis. Its function is as follows. Trans-enoyl reductase; part of the gene cluster that mediates the biosynthesis of tenellin-type 2-pyridones, iron-chelating compounds involved in iron stress tolerance, competition with the natural competitor fungus Metarhizium robertsii and insect hosts infection. TenC collaborates with the hybrid PKS-NRPS synthetase tenS to catalyze the assembly of the polyketide-amino acid backbone, since tenS lacks a designated enoylreductase (ER) domain. Upon formation of the polyketide backbone on the thiotemplate of tenS, the triketide is transferred to the NRPS module and linked to tyrosine to produce the pyrrolidine-2-dione intermediates, including pretellinin A, 11-hydropretellenin A, 12-hydropretellenin A, 13-hydropretellenin A, 14-hydropretellenin A, 12-oxopretellenin A and prototellinin D. The pathway begins with the assembly of the polyketide-amino acid backbone by the hybrid PKS-NRPS tenS with the help of the enoyl reductase tenC. These enzymes catalyze the synthesis of the pyrrolidine-2-dione intermediates pretellinin A, 11-hydropretellenin A, 12-hydropretellenin A, 13-hydropretellenin A, 14-hydropretellenin A, 12-oxopretellenin A and prototellinin D. The cytochrome P450 monooxygenase tenA then catalyzes an oxidative ring expansion of pretenellin A and 14-hydropretellenin A to form the 2-pyridone core, leading to pretenellin B and pyridovericin, respectively. The cytochrome P450 monooxygenase tenB is then required for the selective N-hydroxylation of the 2-pyridone nitrogen of yield tellinin and 15-hydroxytellenin (15-HT), respectively. The UDP-glucosyltransferase GT1 and the methyltransferase MT1, located outside the tenS gene cluster, contribute to the stepwise glycosylation and methylation of 15-HT to obtain the glycoside pyridovericin-N-O-(4-O-methyl-beta-D-glucopyranoside) (PMGP). Additional related compounds such as 1-O-methyl-15-HT, (8Z)-1-O-methyl-15-HT, and O-methyltenellin A are also produced but the enzymes involved in their biosynthesis have still to be determined. This chain is Trans-enoyl reductase tenC, found in Beauveria bassiana (strain ARSEF 2860) (White muscardine disease fungus).